The following is a 773-amino-acid chain: Tyrosine kinase receptor Cad96Ca (773 aa).

A signal peptide spans 1–48 (MVYHHHNHESRIIHCRKQLTSWRRRSLLLTIIVVTATVVSLISQEAEA). Residues 49 to 315 (HNQNAPPILY…ITIFSLKSGT (267 aa)) lie on the Extracellular side of the membrane. The 115-residue stretch at 58–172 (YVRERNWRIS…ENSSGYRPQT (115 aa)) folds into the Cadherin domain. N-linked (GlcNAc...) asparagine glycosylation is found at asparagine 126, asparagine 164, and asparagine 180. Residues 196–302 (SIRNGLPNSR…TPSGGHHNNS (107 aa)) are disordered. The span at 209 to 235 (WYPPVPQNNIFGPPPFGNNYPPPPPNI) shows a compositional bias: pro residues. Acidic residues predominate over residues 243 to 253 (SGEEEQPDEEV). 2 stretches are compositionally biased toward polar residues: residues 254–283 (TPTTPVRISSTTPKSRTKLTPITANNSTRV) and 290–302 (ETTTPSGGHHNNS). Residues asparagine 278, asparagine 279, asparagine 300, and asparagine 301 are each glycosylated (N-linked (GlcNAc...) asparagine). The helical transmembrane segment at 316–336 (IPIVVTVGGFFVAIAVLLAYL) threads the bilayer. Topologically, residues 337-773 (CRRRLCAISR…NIVSLSGEKL (437 aa)) are cytoplasmic. 2 disordered regions span residues 352–373 (KEKEELAKKSNQSQLSSTLTDD) and 411–447 (TGVTNGGVSSPGVPSPGTGEPGSNLGPGCLTGGAGSS). Positions 361–373 (SNQSQLSSTLTDD) are enriched in polar residues. Positions 411–433 (TGVTNGGVSSPGVPSPGTGEPGS) are enriched in low complexity. One can recognise a Protein kinase domain in the interval 470-749 (LKFFNILGEG…MLDKLLHTEM (280 aa)). ATP contacts are provided by residues 476-484 (LGEGAFGQV) and lysine 504. Aspartate 610 (proton acceptor) is an active-site residue.

Belongs to the protein kinase superfamily. Tyr protein kinase family. Fibroblast growth factor receptor subfamily.

Its subcellular location is the membrane. The enzyme catalyses L-tyrosyl-[protein] + ATP = O-phospho-L-tyrosyl-[protein] + ADP + H(+). The chain is Tyrosine kinase receptor Cad96Ca (Cad96Ca) from Drosophila melanogaster (Fruit fly).